The following is a 340-amino-acid chain: Pilin (340 aa).

The signal sequence occupies residues 1–23; the sequence is MKLRHLLLTGAALTSFAATTVHG. 2 consecutive cross-links (isoaspartyl lysine isopeptide (Lys-Asn)) follow at residues 36–168 and 179–303; these read KNLD…QFKN and KKVS…TFTN. Lys161 is covalently cross-linked (Threonyl lysine isopeptide (Lys-Thr) (interchain with T-311)). An EVPTG sorting signal motif is present at residues 308-312; the sequence is EVPTG. Thr311 carries the post-translational modification Pentaglycyl murein peptidoglycan amidated threonine; alternate. A Threonyl lysine isopeptide (Thr-Lys) (interchain with K-161); alternate cross-link involves residue Thr311. Positions 312–340 are cleaved as a propeptide — removed by sortase C1; the sequence is GVAMTVAPYIALGIVAVGGALYFVKKKNA.

Belongs to the Streptococcus pilin family. As to quaternary structure, forms columns of about 3-nanometers in diameter of head-to-tail-assembled molecules. In terms of processing, proteolytically processed and assembled in pili through a transpeptidation reaction catalyzed by the sortase C1. The last pilin subunit is cross-linked to the peptidoglycan.

The protein resides in the secreted. Its subcellular location is the cell wall. It is found in the fimbrium. Major component of the pilus. A stack of the pilin subunits, joined by intermolecular isopeptide bonds, forms the pilus. The pilus is required for bacterial adhesion to host cells, for bacterial aggregation, and for biofilm formation. This Streptococcus pyogenes serotype M1 protein is Pilin.